Here is a 415-residue protein sequence, read N- to C-terminus: Serine/threonine transporter SstT (415 aa).

8 consecutive transmembrane segments (helical) span residues 15–35, 45–65, 85–105, 142–162, 193–213, 217–237, 301–321, and 331–351; these read GSLV…AWLA, LGTL…WILV, ILYI…SFIF, ALLN…GIAL, VGIF…ALLG, LLVV…PLIV, GAAV…GIPV, and VVSA…LLLI.

It belongs to the dicarboxylate/amino acid:cation symporter (DAACS) (TC 2.A.23) family.

The protein localises to the cell inner membrane. The enzyme catalyses L-serine(in) + Na(+)(in) = L-serine(out) + Na(+)(out). It catalyses the reaction L-threonine(in) + Na(+)(in) = L-threonine(out) + Na(+)(out). Its function is as follows. Involved in the import of serine and threonine into the cell, with the concomitant import of sodium (symport system). The chain is Serine/threonine transporter SstT from Photorhabdus laumondii subsp. laumondii (strain DSM 15139 / CIP 105565 / TT01) (Photorhabdus luminescens subsp. laumondii).